A 2271-amino-acid chain; its full sequence is Protein Ycf2 (2271 aa).

Position 1628–1635 (glycine 1628–serine 1635) interacts with ATP.

This sequence belongs to the Ycf2 family.

The protein resides in the plastid. It localises to the chloroplast stroma. Functionally, probable ATPase of unknown function. Its presence in a non-photosynthetic plant (Epifagus virginiana) and experiments in tobacco indicate that it has an essential function which is probably not related to photosynthesis. This chain is Protein Ycf2, found in Illicium oligandrum (Star anise).